Here is a 225-residue protein sequence, read N- to C-terminus: Platelet-derived growth factor subunit B (225 aa).

Residues 1–12 (LPLCCYLRLVSA) form the signal peptide. Positions 13–73 (EGDPIPEELY…ESESSSRGRR (61 aa)) are cleaved as a propeptide — removed in mature form. An N-linked (GlcNAc...) asparagine glycan is attached at Asn-55. 3 disulfides stabilise this stretch: Cys-89–Cys-133, Cys-122–Cys-170, and Cys-126–Cys-172. A propeptide spans 183–225 (RSPGTSREHRAKTPQTRVTVRTVRIRRPPKGKHRKFKHTHDKK) (removed in mature form).

It belongs to the PDGF/VEGF growth factor family. Antiparallel homodimer; disulfide-linked. Antiparallel heterodimer with PDGFA; disulfide-linked. The PDGFB homodimer interacts with PDGFRA and PDGFRB homodimers, and with heterodimers formed by PDGFRA and PDGFRB. The heterodimer composed of PDGFA and PDGFB interacts with PDGFRB homodimers, and with heterodimers formed by PDGFRA and PDGFRB. Interacts with XLKD1. Interacts with LRP1. Interacts with SORL1 (via the N-terminal ectodomain). Interacts with CD82; this interaction inhibits PDGFB-mediated signaling pathway. In terms of tissue distribution, expressed in a distinct subpopulation of smooth muscle cells in injured arteries.

The protein localises to the secreted. Functionally, growth factor that plays an essential role in the regulation of embryonic development, cell proliferation, cell migration, survival and chemotaxis. Potent mitogen for cells of mesenchymal origin. Required for normal proliferation and recruitment of pericytes and vascular smooth muscle cells in the central nervous system, skin, lung, heart and placenta. Required for normal blood vessel development, and for normal development of kidney glomeruli. Plays an important role in wound healing. Signaling is modulated by the formation of heterodimers with PDGFA. The chain is Platelet-derived growth factor subunit B (Pdgfb) from Rattus norvegicus (Rat).